A 175-amino-acid polypeptide reads, in one-letter code: Large ribosomal subunit protein uL10 (175 aa).

This sequence belongs to the universal ribosomal protein uL10 family. As to quaternary structure, part of the ribosomal stalk of the 50S ribosomal subunit. The N-terminus interacts with L11 and the large rRNA to form the base of the stalk. The C-terminus forms an elongated spine to which L12 dimers bind in a sequential fashion forming a multimeric L10(L12)X complex.

Its function is as follows. Forms part of the ribosomal stalk, playing a central role in the interaction of the ribosome with GTP-bound translation factors. In Prochlorococcus marinus (strain MIT 9301), this protein is Large ribosomal subunit protein uL10.